The sequence spans 591 residues: Aspartate--tRNA(Asp/Asn) ligase (591 aa).

Glu-174 provides a ligand contact to L-aspartate. The tract at residues 198–201 (QLFK) is aspartate. Arg-220 contacts L-aspartate. ATP contacts are provided by residues 220–222 (RDE) and Gln-229. His-450 is a binding site for L-aspartate. Glu-483 contacts ATP. Arg-490 is an L-aspartate binding site. 535-538 (GLDR) contacts ATP.

The protein belongs to the class-II aminoacyl-tRNA synthetase family. Type 1 subfamily. As to quaternary structure, homodimer.

The protein resides in the cytoplasm. The catalysed reaction is tRNA(Asx) + L-aspartate + ATP = L-aspartyl-tRNA(Asx) + AMP + diphosphate. Its function is as follows. Aspartyl-tRNA synthetase with relaxed tRNA specificity since it is able to aspartylate not only its cognate tRNA(Asp) but also tRNA(Asn). Reaction proceeds in two steps: L-aspartate is first activated by ATP to form Asp-AMP and then transferred to the acceptor end of tRNA(Asp/Asn). In Pseudomonas fluorescens (strain SBW25), this protein is Aspartate--tRNA(Asp/Asn) ligase.